Consider the following 340-residue polypeptide: Ketol-acid reductoisomerase (NADP(+)) (340 aa).

In terms of domain architecture, KARI N-terminal Rossmann spans 3 to 183 (INVYYDKDCD…GGGRTGIIET (181 aa)). NADP(+) contacts are provided by residues 26–29 (FGSQ), serine 54, and 84–87 (DELQ). Residue histidine 109 is part of the active site. Glycine 135 serves as a coordination point for NADP(+). One can recognise a KARI C-terminal knotted domain in the interval 184–329 (TFKDETETDL…KKLRAMMPWI (146 aa)). The Mg(2+) site is built by aspartate 192, glutamate 196, glutamate 228, and glutamate 232. Serine 253 contacts substrate.

This sequence belongs to the ketol-acid reductoisomerase family. Mg(2+) serves as cofactor.

It carries out the reaction (2R)-2,3-dihydroxy-3-methylbutanoate + NADP(+) = (2S)-2-acetolactate + NADPH + H(+). The enzyme catalyses (2R,3R)-2,3-dihydroxy-3-methylpentanoate + NADP(+) = (S)-2-ethyl-2-hydroxy-3-oxobutanoate + NADPH + H(+). The protein operates within amino-acid biosynthesis; L-isoleucine biosynthesis; L-isoleucine from 2-oxobutanoate: step 2/4. It participates in amino-acid biosynthesis; L-valine biosynthesis; L-valine from pyruvate: step 2/4. Involved in the biosynthesis of branched-chain amino acids (BCAA). Catalyzes an alkyl-migration followed by a ketol-acid reduction of (S)-2-acetolactate (S2AL) to yield (R)-2,3-dihydroxy-isovalerate. In the isomerase reaction, S2AL is rearranged via a Mg-dependent methyl migration to produce 3-hydroxy-3-methyl-2-ketobutyrate (HMKB). In the reductase reaction, this 2-ketoacid undergoes a metal-dependent reduction by NADPH to yield (R)-2,3-dihydroxy-isovalerate. The polypeptide is Ketol-acid reductoisomerase (NADP(+)) (Campylobacter concisus (strain 13826)).